The chain runs to 263 residues: MISYDDQVLVSYSNQRWEEAEAFSSQFGLRLVALEALPAKSDRAVYLLNFSDTRVELVNWREQAPGPVFVDFVEGALAYRREHGGGRGEMVAKSVGLKGEVKCLNVLDATAGLGRDAYVLAALGCHVVMYERNPLVHALLADGLRRALECADAASVVSRMTLHLGEAFNTFPDGIDVVYLDPMFPERRKSSAVKKEMQAFKDIVGADPDADELLAAALRQEVKRIVVKRPKGAPCLLGREPSFTVTGKSGRFDVYALRKLTGG.

S-adenosyl-L-methionine contacts are provided by residues 115 to 116 (RD), 131 to 132 (ER), and Asp-181.

It belongs to the methyltransferase superfamily. RsmJ family.

The protein resides in the cytoplasm. It catalyses the reaction guanosine(1516) in 16S rRNA + S-adenosyl-L-methionine = N(2)-methylguanosine(1516) in 16S rRNA + S-adenosyl-L-homocysteine + H(+). Its function is as follows. Specifically methylates the guanosine in position 1516 of 16S rRNA. The chain is Ribosomal RNA small subunit methyltransferase J from Hahella chejuensis (strain KCTC 2396).